The primary structure comprises 136 residues: Cytochrome b5 (136 aa).

One can recognise a Cytochrome b5 heme-binding domain in the interval 5–81 (TKVFTLAEVS…LDEYYVGDID (77 aa)). 2 residues coordinate heme: His-40 and His-64. A helical membrane pass occupies residues 107–127 (FVVKLLQFLVPLIILGVAFGI).

It belongs to the cytochrome b5 family. In terms of tissue distribution, is highly expressed in developing seeds, moderately expressed in flowers, and is expressed at low levels in the leaf.

It localises to the endoplasmic reticulum membrane. The protein localises to the microsome membrane. Its function is as follows. Cytochrome b5 is a membrane bound hemoprotein which function as an electron carrier for several membrane bound oxygenases. May play a key role in the modification by desaturation of fatty acids in the endoplasmic reticulum, which in the developing seed is utilized for membrane synthesis and in the developmentally regulated production of large amounts of storage lipids. Is involved in the reduction of cytochrome P-450 and may therefore be involved in flavonoid biosynthesis in the petals. This is Cytochrome b5 from Nicotiana tabacum (Common tobacco).